We begin with the raw amino-acid sequence, 78 residues long: uncharacterized protein (78 aa).

The chain crosses the membrane as a helical span at residues 13-33 (STILILLMSVLILLLSIDILA).

The protein localises to the membrane. This is an uncharacterized protein from Methanocaldococcus jannaschii (strain ATCC 43067 / DSM 2661 / JAL-1 / JCM 10045 / NBRC 100440) (Methanococcus jannaschii).